The sequence spans 617 residues: Protelomerase (617 aa).

DNA-binding residues include R270, K295, R376, and H409. Y418 acts as the Nucleophile in catalysis. The span at 535–562 shows a compositional bias: acidic residues; sequence DAEEDEIEEDFTDEEIDDTEFDVSDNAS. Residues 535–575 form a disordered region; sequence DAEEDEIEEDFTDEEIDDTEFDVSDNASDEDKPEDKPRFAA. Residues 563–575 show a composition bias toward basic and acidic residues; the sequence is DEDKPEDKPRFAA.

This sequence belongs to the Caudoviricetes Protelomerase family. In terms of assembly, monomer. Homodimer; in presence of DNA.

Its function is as follows. Converts the circular intermediates produced by the viral replication and carrying a joined telomere site to a linear DNA molecule with covalently closed hairpin ends. The viral circular DNA is cleaved at a palindromic site called telRL thereby generating a linear prophage plasmid with telomeres. Binds covalently to the 3'-phosphoryl of the cleaved strands. This chain is Protelomerase (tel), found in Yersinia enterocolitica (Bacteriophage PY54).